A 211-amino-acid polypeptide reads, in one-letter code: Ceramide-1-phosphate transfer protein (211 aa).

Residues aspartate 53, lysine 57, arginine 103, arginine 107, and histidine 147 each contribute to the an N-acylsphingoid base 1-phosphate site.

This sequence belongs to the GLTP family.

The protein localises to the cytoplasm. It localises to the cytosol. It is found in the golgi apparatus. The protein resides in the trans-Golgi network membrane. Its subcellular location is the cell membrane. The protein localises to the endosome membrane. It localises to the nucleus outer membrane. It carries out the reaction N-(hexadecanoyl)-sphing-4-enine-1-phosphate(in) = N-(hexadecanoyl)-sphing-4-enine-1-phosphate(out). The catalysed reaction is N-(9Z-octadecenoyl)-sphing-4-enine-1-phosphate(in) = N-(9Z-octadecenoyl)-sphing-4-enine-1-phosphate(out). In terms of biological role, mediates the intracellular transfer of ceramide-1-phosphate (C1P) between organelle membranes and the cell membrane. Required for normal structure of the Golgi stacks. Can bind phosphoceramides with a variety of aliphatic chains, but has a preference for lipids with saturated C16:0 or monounsaturated C18:1 aliphatic chains, and is inefficient with phosphoceramides containing lignoceryl (C24:0). Plays a role in the regulation of the cellular levels of ceramide-1-phosphate, and thereby contributes to the regulation of phospholipase PLA2G4A activity and the release of arachidonic acid. Has no activity with galactosylceramide, lactosylceramide, sphingomyelin, phosphatidylcholine, phosphatidic acid and ceramide. C1P transfer is stimulated by phosphatidylserine in C1P source vesicles. Regulates autophagy and pyroptosis, but not apoptosis. In Danio rerio (Zebrafish), this protein is Ceramide-1-phosphate transfer protein (cptp).